The chain runs to 1310 residues: Cadherin-related family member 2 (1310 aa).

The signal sequence occupies residues 1–20 (MAQLWLSCFLLPALVVSVAA). Topologically, residues 21-1154 (NVAPKFLANM…ESDLSKQLIS (1134 aa)) are extracellular. Cadherin domains follow at residues 27 to 124 (LANM…APVF), 125 to 241 (QNTA…DPQF), and 242 to 353 (VREF…KPEF). Residues Asn-29, Asn-134, Asn-182, Asn-188, Asn-195, Asn-300, Asn-355, Asn-371, Asn-401, Asn-460, Asn-565, Asn-600, Asn-616, Asn-632, Asn-680, Asn-696, Asn-701, Asn-775, Asn-821, Asn-871, Asn-877, Asn-911, Asn-932, and Asn-1107 are each glycosylated (N-linked (GlcNAc...) asparagine). 6 Cadherin domains span residues 368–480 (AQVN…RPTF), 481–586 (PQSL…APVV), 586–695 (VSGS…LPIF), 696–808 (NQSS…PPTL), 810–928 (VASL…APYF), and 930–1058 (PENK…TPKE). The helical transmembrane segment at 1155-1175 (VIIGLGVALLLVLVIMTMAFV) threads the bilayer. The Cytoplasmic portion of the chain corresponds to 1176-1310 (CVRKSYNRKL…TNAGLDTTDL (135 aa)). The mediates interaction with USH1C and MYO7B and is required for proper localization to microvilli tips and function in microvilli organization stretch occupies residues 1180-1310 (SYNRKLQAMK…TNAGLDTTDL (131 aa)). At Ser-1248 the chain carries Phosphoserine. Over residues 1259 to 1268 (NSQEIKEHRP) the composition is skewed to basic and acidic residues. Positions 1259 to 1310 (NSQEIKEHRPPHTPPEPDPEPLSVVLLGRQAGASGQLEGPSYTNAGLDTTDL) are disordered. At Ser-1299 the chain carries Phosphoserine. Positions 1299 to 1310 (SYTNAGLDTTDL) are enriched in polar residues.

Part of the IMAC/intermicrovillar adhesion complex/intermicrovillar tip-link complex composed of ANKS4B, MYO7B, USH1C, CDHR2 and CDHR5. Interacts with MAST2. Interacts (via cytoplasmic domain) with USH1C and MYO7B; required for proper localization of CDHR2 to microvilli tips and its function in brush border differentiation. In terms of tissue distribution, highly expressed in liver, kidney and colon. Moderately expressed in small intestine. Down-regulated in a number of liver and colon cancers. Expressed in duodenum with higher expression in enterocytes along the villus axis and lower expression in crypts (at protein level).

The protein localises to the apical cell membrane. It is found in the cell projection. Its subcellular location is the microvillus membrane. The protein resides in the cell junction. Functionally, intermicrovillar adhesion molecule that forms, via its extracellular domain, calcium-dependent heterophilic complexes with CDHR5 on adjacent microvilli. Thereby, controls the packing of microvilli at the apical membrane of epithelial cells. Through its cytoplasmic domain, interacts with microvillus cytoplasmic proteins to form the intermicrovillar adhesion complex/IMAC. This complex plays a central role in microvilli and epithelial brush border differentiation. May also play a role in cell-cell adhesion and contact inhibition in epithelial cells. The sequence is that of Cadherin-related family member 2 from Homo sapiens (Human).